A 451-amino-acid chain; its full sequence is Bifunctional protein GlmU (451 aa).

The interval 1–229 (MQRHAIILAA…FDEIIGVNDR (229 aa)) is pyrophosphorylase. UDP-N-acetyl-alpha-D-glucosamine-binding positions include 8–11 (LAAG), Lys22, Gln72, and 77–78 (GT). Asp102 is a binding site for Mg(2+). UDP-N-acetyl-alpha-D-glucosamine is bound by residues Gly139, Glu154, and Asn227. Residue Asn227 coordinates Mg(2+). The interval 230-250 (LMLSEAEKALQQRINRYHMEN) is linker. An N-acetyltransferase region spans residues 251–451 (GVTIIDPSST…QVNKEGYLKK (201 aa)). 2 residues coordinate UDP-N-acetyl-alpha-D-glucosamine: Arg332 and Lys350. Catalysis depends on His362, which acts as the Proton acceptor. The UDP-N-acetyl-alpha-D-glucosamine site is built by Tyr365 and Asn376. Residues 385 to 386 (NY), Ala422, and Arg439 each bind acetyl-CoA.

This sequence in the N-terminal section; belongs to the N-acetylglucosamine-1-phosphate uridyltransferase family. In the C-terminal section; belongs to the transferase hexapeptide repeat family. As to quaternary structure, homotrimer. Mg(2+) serves as cofactor.

The protein localises to the cytoplasm. It catalyses the reaction alpha-D-glucosamine 1-phosphate + acetyl-CoA = N-acetyl-alpha-D-glucosamine 1-phosphate + CoA + H(+). The enzyme catalyses N-acetyl-alpha-D-glucosamine 1-phosphate + UTP + H(+) = UDP-N-acetyl-alpha-D-glucosamine + diphosphate. It functions in the pathway nucleotide-sugar biosynthesis; UDP-N-acetyl-alpha-D-glucosamine biosynthesis; N-acetyl-alpha-D-glucosamine 1-phosphate from alpha-D-glucosamine 6-phosphate (route II): step 2/2. Its pathway is nucleotide-sugar biosynthesis; UDP-N-acetyl-alpha-D-glucosamine biosynthesis; UDP-N-acetyl-alpha-D-glucosamine from N-acetyl-alpha-D-glucosamine 1-phosphate: step 1/1. It participates in bacterial outer membrane biogenesis; LPS lipid A biosynthesis. Catalyzes the last two sequential reactions in the de novo biosynthetic pathway for UDP-N-acetylglucosamine (UDP-GlcNAc). The C-terminal domain catalyzes the transfer of acetyl group from acetyl coenzyme A to glucosamine-1-phosphate (GlcN-1-P) to produce N-acetylglucosamine-1-phosphate (GlcNAc-1-P), which is converted into UDP-GlcNAc by the transfer of uridine 5-monophosphate (from uridine 5-triphosphate), a reaction catalyzed by the N-terminal domain. The polypeptide is Bifunctional protein GlmU (Staphylococcus epidermidis).